Consider the following 822-residue polypeptide: Aminopeptidase O (822 aa).

His480 contributes to the Zn(2+) binding site. Catalysis depends on Glu481, which acts as the Proton acceptor. Zn(2+) is bound by residues His484 and Glu503. The short motif at 692 to 702 (RRPGKRQRRKR) is the Nucleolar localization signal element.

Belongs to the peptidase M1 family. Requires Zn(2+) as cofactor.

Its subcellular location is the nucleus. The protein localises to the nucleolus. Its function is as follows. Aminopeptidase which catalyzes the hydrolysis of amino acid residues from the N-terminus of peptide or protein substrates. The sequence is that of Aminopeptidase O (Aopep) from Rattus norvegicus (Rat).